The primary structure comprises 340 residues: Leucine-rich repeat-containing protein 23 (340 aa).

Residues 1 to 27 show a composition bias toward acidic residues; the sequence is MSDEDDVDDVDAEQDEVESDKEIEEWE. The tract at residues 1–38 is disordered; sequence MSDEDDVDDVDAEQDEVESDKEIEEWEDYRKETEEASE. LRR repeat units follow at residues 89–110, 111–134, 177–197, 198–219, 220–241, and 243–264; these read HLRY…NSLT, HLLW…PYLQ, SLHT…IYLP, KLKN…ENLS, NLTT…SQEM, and SLQY…AKLR. The interval 205–340 is interaction with RSPH9; it reads AQNLLKKVEG…QDMEPYLPPV (136 aa). In terms of domain architecture, LRRCT spans 277–315; that stretch reads NPCADETDYRQEALVQMAHLERLDKEFYEDDDRAEAEEI. The stretch at 305–328 forms a coiled coil; the sequence is EDDDRAEAEEIRQRLKEEQDQDLD. The tract at residues 317–340 is disordered; that stretch reads QRLKEEQDQDLDPDQDMEPYLPPV. The segment covering 323 to 333 has biased composition (acidic residues); it reads QDQDLDPDQDM.

As to quaternary structure, component of the axonemal radial spoke complex. Interacts with RSPH3A and RSPH3B. Interacts with RSPH9. In terms of tissue distribution, expressed in the testis (at protein level).

The protein resides in the cytoplasm. The protein localises to the cytoskeleton. It localises to the flagellum axoneme. Functionally, essential for sperm motility and male fertility. Plays an important role in the proper assembly of the third radial spoke (RS3) head and the bridge structure between RS2 and RS3 in the sperm flagella. In Mus musculus (Mouse), this protein is Leucine-rich repeat-containing protein 23 (Lrrc23).